The chain runs to 671 residues: DNA polymerase kappa (671 aa).

The 181-residue stretch at 105 to 285 (WLHVDMDAFY…LPVRKIGGIG (181 aa)) folds into the UmuC domain. Mg(2+) is bound by residues aspartate 109 and aspartate 200. Glutamate 201 is a catalytic residue. A UBZ3-type zinc finger spans residues 576 to 613 (YWIDGYKCVLCGIELPPSFVEERQEHSDFHLAQRLQNE). 4 residues coordinate Zn(2+): cysteine 583, cysteine 586, histidine 601, and histidine 605. The disordered stretch occupies residues 607–671 (AQRLQNEETG…NQNSNETQRK (65 aa)). Positions 625-632 (KRRILGKE) match the Nuclear localization signal motif. The span at 629-650 (LGKEKVNSKPKKQKPDQKDSSK) shows a compositional bias: basic and acidic residues. Positions 659–671 (TKSNQNSNETQRK) are enriched in polar residues.

The protein belongs to the DNA polymerase type-Y family. The cofactor is Mg(2+). In terms of tissue distribution, expressed in roots, leaves, stems, flowers and siliques. Present in endoreduplicating cells.

The protein resides in the nucleus. It catalyses the reaction DNA(n) + a 2'-deoxyribonucleoside 5'-triphosphate = DNA(n+1) + diphosphate. Its activity is regulated as follows. Unable to bypass a single 1,N(6)-ethenoadenine (epsilon-dA) or an abasic site lesions in DNA templates. Functionally, template-directed low-fidelity DNA polymerase specifically involved in DNA repair. Able to extend primer-terminal mispairs, and to insert nucleotides opposite to a single 7,8-dihydro-8-oxoGuanine (8-oxoG) lesion and moderately extend from the resulting primer end, thus leading to both error-free and error-prone bypass of 8-oxoG DNA lesions. Probably involved in consecutive DNA replication cycles in the absence of mitosis. Binds preferentially template-primer DNA substrates or single-stranded DNA. Plays an important role in translesion synthesis, where the normal high-fidelity DNA polymerases cannot proceed and DNA synthesis stalls. Depending on the context, it inserts the correct base, but causes frequent base transitions, transversions and frameshifts. The polypeptide is DNA polymerase kappa (Arabidopsis thaliana (Mouse-ear cress)).